The following is a 477-amino-acid chain: Protoporphyrinogen oxidase (477 aa).

Residues 9–14, Trp42, 57–60, Val257, Ala449, and 454–456 contribute to the FAD site; these read GGGISG, GPRG, and VAV.

This sequence belongs to the protoporphyrinogen/coproporphyrinogen oxidase family. Protoporphyrinogen oxidase subfamily. Monomer. Homodimer. Requires FAD as cofactor.

The protein resides in the mitochondrion inner membrane. The catalysed reaction is protoporphyrinogen IX + 3 O2 = protoporphyrin IX + 3 H2O2. It functions in the pathway porphyrin-containing compound metabolism; protoporphyrin-IX biosynthesis; protoporphyrin-IX from protoporphyrinogen-IX: step 1/1. Its function is as follows. Catalyzes the 6-electron oxidation of protoporphyrinogen-IX to form protoporphyrin-IX. The polypeptide is Protoporphyrinogen oxidase (PPOX) (Macaca fascicularis (Crab-eating macaque)).